A 1211-amino-acid polypeptide reads, in one-letter code: MGSKALITSPDISSGQLYIKLPTFFHLYVWPFALFVYPYIGYVYQNKLYSEEVRYLTYIAVGTIHALFWLAGEWNTKVYCLMTCRKTDKVEQATHILVTPSKIGESSSVEPITKLVLPDSQTIQYSFSFQRKRFIYEPEKGCFANITFPMDEPSTIGTLKKSTGLTNIQSEIFLYRYGKNCFDIPIPTFGTLFKEHAVAPFFVFQIFCCVLWCLDDYWYFSLFSMFMIIALECSVVWQRQRTLTEFRTMSIKPYEIQVYRNKHWFPISTEDLLPNDVVSVLHNKEDSGLPCDLLLLSGSCVVNEAMLSGESTPLVKESIELRPEEAVIDVDELDKNAVLFGGTRVLQVTQSPFCKLKTPDNGVPAIVLRTGFETSQGSLVRTMVFSSEKVTANNRESLYFILFLLVFAIAASGYVWHVGSKTERSRYKLMLDCVMIITSVVPSELPMELSMAVNASLGALSKYYIYCTEPFRIPLSGHLDICCFDKTGTLTEEHMVVQGIAGVNRKDPYSLEKLSDASNDAILAIATAHTLVLLEQEGETPKVVGDPMEKATVENLGWSIEKKNFVSAPEGSVFYKGKVQIIRNFQFSSALKRQSSVSNVRVSGGSFKTFVSVKGAPEVIATMLREVPKDYEKIYKDYGRKGSRVLALGYKYFKNYIPENQVSDLSRESIESDLVFAGFLIFTSPLKEDARQTVQMLNNSSHRCMMITGDNPLTAVYVAEQVGIVEKPTLVLDIKHENEKILEWKSTDDTINLPMNPHKSLEASLYEKYDLCITGRALSQIINPDVIMSIFTHAWVYARVSPSQKEFMISTLKHNGYITLMCGDGTNDVGALKQAHVGVALLNASEEDMLEMQERARNQKLMGVYEKQIQLAKRFNLPTPPVPPALCHAFPPGPNNPHREKTQEGLNKVLEDLETKKASDVQLTEAEKAAERRANLANKMFDTLANASDDEAPKLKLGDASVAAPFTSKLAVVSSITNIVRQGRCTLVALVQMHKILALNCLITAYSLSVLHLDGIKFGDTQYTISGMLMSVCFYCVSRARPLETLSKERPQAGIFNTYIIGSVLGQFAIHIVTLIYITRVVYLYEDPLEKVDLEETFKPSLLNTAIYLLQLIQQVSTFAINYQGRPFREALSENKGMYYGLLGIAFVAIAGVTEFSPELNAKLQLVKMAYNFQIQLLATMVVDYAACWIIEELMKKYFRDNKPKEIVLRN.

Residues 1-23 (MGSKALITSPDISSGQLYIKLPT) are Cytoplasmic-facing. The chain crosses the membrane as a helical span at residues 24 to 44 (FFHLYVWPFALFVYPYIGYVY). Residues 45–54 (QNKLYSEEVR) lie on the Lumenal side of the membrane. A helical membrane pass occupies residues 55 to 75 (YLTYIAVGTIHALFWLAGEWN). The Cytoplasmic segment spans residues 76–191 (TKVYCLMTCR…FDIPIPTFGT (116 aa)). The tract at residues 155–185 (TIGTLKKSTGLTNIQSEIFLYRYGKNCFDIP) is A-domain; part 1. Residues 192 to 212 (LFKEHAVAPFFVFQIFCCVLW) form a helical membrane-spanning segment. The Lumenal portion of the chain corresponds to 213–216 (CLDD). A helical transmembrane segment spans residues 217-237 (YWYFSLFSMFMIIALECSVVW). The Cytoplasmic portion of the chain corresponds to 238–397 (QRQRTLTEFR…EKVTANNRES (160 aa)). Residues 250–388 (SIKPYEIQVY…LVRTMVFSSE (139 aa)) are A-domain; part 2. A helical membrane pass occupies residues 398–418 (LYFILFLLVFAIAASGYVWHV). Residues 419–1057 (GSKTERSRYK…KERPQAGIFN (639 aa)) lie on the Lumenal side of the membrane. Residues 464-493 (YIYCTEPFRIPLSGHLDICCFDKTGTLTEE) are P-domain; part 1. D485 serves as the catalytic 4-aspartylphosphate intermediate. Mg(2+) is bound by residues D485 and T487. ATP is bound by residues 485-487 (DKT), F587, R644, D710, and 824-828 (DGTND). Positions 495 to 685 (MVVQGIAGVN…FAGFLIFTSP (191 aa)) are N-domain. Positions 688–845 (EDARQTVQML…HVGVALLNAS (158 aa)) are P-domain; part 2. D824 lines the Mg(2+) pocket. The tract at residues 846-955 (EEDMLEMQER…NASDDEAPKL (110 aa)) is arm-like. A P-domain; part 3 region spans residues 956 to 971 (KLGDASVAAPFTSKLA). The helical transmembrane segment at 1058 to 1078 (TYIIGSVLGQFAIHIVTLIYI) threads the bilayer. The Cytoplasmic portion of the chain corresponds to 1079–1100 (TRVVYLYEDPLEKVDLEETFKP). Residues 1101–1121 (SLLNTAIYLLQLIQQVSTFAI) traverse the membrane as a helical segment. Over 1122-1136 (NYQGRPFREALSENK) the chain is Lumenal. Residues 1137–1157 (GMYYGLLGIAFVAIAGVTEFS) traverse the membrane as a helical segment. Residues 1158–1174 (PELNAKLQLVKMAYNFQ) are Cytoplasmic-facing. A helical transmembrane segment spans residues 1175–1195 (IQLLATMVVDYAACWIIEELM). Topologically, residues 1196 to 1211 (KKYFRDNKPKEIVLRN) are lumenal.

This sequence belongs to the cation transport ATPase (P-type) (TC 3.A.3) family. Type V subfamily. Requires Mg(2+) as cofactor.

Its subcellular location is the endoplasmic reticulum membrane. The catalysed reaction is [protein]-with a C-terminal TM segment(out) + ATP + H2O = [protein]-with a C-terminal TM segment(in) + ADP + phosphate + H(+). Functionally, endoplasmic reticulum translocase required to remove mitochondrial transmembrane proteins mistargeted to the endoplasmic reticulum. Acts as a dislocase that mediates the ATP-dependent extraction of mislocalized mitochondrial transmembrane proteins from the endoplasmic reticulum membrane. Specifically binds mitochondrial tail-anchored transmembrane proteins: has an atypically large substrate-binding pocket that recognizes and binds moderately hydrophobic transmembranes with short hydrophilic lumenal domains. Involved in controlling nuclear calcium ion levels. Required for cytokinesis and stabilizing microtubules. Required for assembly of the forespore membrane. Involved in calcium transport to the endoplasmic reticulum. This Schizosaccharomyces pombe (strain 972 / ATCC 24843) (Fission yeast) protein is Endoplasmic reticulum transmembrane helix translocase.